The following is a 302-amino-acid chain: G-protein coupled receptor A5 (302 aa).

Topologically, residues 1 to 20 (MADSSNSSLNCTAIHDQTVL) are extracellular. Residues 21-41 (ILGQVFNSVWLFISVIFLYIF) form a helical membrane-spanning segment. At 42–50 (ACKLCFRPR) the chain is on the cytoplasmic side. The chain crosses the membrane as a helical span at residues 51–71 (IYLWLSFYTLGFMLWVLCKVL). The Extracellular segment spans residues 72-81 (QEYVTGKFKC). Residues 82–102 (VITNCIGDFCLVFLSCIMLGI) form a helical membrane-spanning segment. Residues 103 to 122 (MLDRYLKIQGTLRGGMKDIH) are Cytoplasmic-facing. Residues 123 to 143 (IGIFVSASCFGSLMIALLDGL) traverse the membrane as a helical segment. The Extracellular segment spans residues 144 to 173 (HMGDSEKLQFNGTESFKCLPATSVSSYKAQ). The chain crosses the membrane as a helical span at residues 174 to 194 (LMFKSIFCIICIIMCLILTCL). Over 195–208 (TAKKVLGTRLRKKY) the chain is Cytoplasmic. A helical membrane pass occupies residues 209–229 (VIVGNVGLLSFVNILLWVMIA). The Extracellular portion of the chain corresponds to 230 to 249 (CGLLKQALESNLSLCPTKQS). The chain crosses the membrane as a helical span at residues 250–270 (TYIYPYTMPVTVIFVLVIYLF). At 271 to 302 (SSTHMKNAMRKSGQIRHSLSSPNQVQSSFRLV) the chain is on the cytoplasmic side.

Belongs to the G-protein coupled receptor 1 family.

The protein resides in the host cell membrane. It localises to the host endoplasmic reticulum membrane. Acts as a viral G-protein coupled receptor that constitutively activates host alphai-type G-proteins, thereby inhibiting host forskolin-triggered CREB activation. This is G-protein coupled receptor A5 (A5) from Connochaetes taurinus (Blue wildebeest).